We begin with the raw amino-acid sequence, 729 residues long: Fatty acid oxidation complex subunit alpha (729 aa).

The segment at 1-189 is enoyl-CoA hydratase/isomerase; that stretch reads MLYKGDTLYL…KIGLVDGVVK (189 aa). Position 296 (Asp-296) interacts with substrate. The interval 311–729 is 3-hydroxyacyl-CoA dehydrogenase; the sequence is ETPKHAAVLG…ARPVGELKTA (419 aa). Residues Met-324, Asp-343, 400–402, Lys-407, and Ser-429 contribute to the NAD(+) site; that span reads VVE. The For 3-hydroxyacyl-CoA dehydrogenase activity role is filled by His-450. Asn-453 contacts NAD(+). Asn-500 and Tyr-660 together coordinate substrate.

It in the N-terminal section; belongs to the enoyl-CoA hydratase/isomerase family. This sequence in the C-terminal section; belongs to the 3-hydroxyacyl-CoA dehydrogenase family. As to quaternary structure, heterotetramer of two alpha chains (FadB) and two beta chains (FadA).

The catalysed reaction is a (3S)-3-hydroxyacyl-CoA + NAD(+) = a 3-oxoacyl-CoA + NADH + H(+). It catalyses the reaction a (3S)-3-hydroxyacyl-CoA = a (2E)-enoyl-CoA + H2O. The enzyme catalyses a 4-saturated-(3S)-3-hydroxyacyl-CoA = a (3E)-enoyl-CoA + H2O. It carries out the reaction (3S)-3-hydroxybutanoyl-CoA = (3R)-3-hydroxybutanoyl-CoA. The catalysed reaction is a (3Z)-enoyl-CoA = a 4-saturated (2E)-enoyl-CoA. It catalyses the reaction a (3E)-enoyl-CoA = a 4-saturated (2E)-enoyl-CoA. Its pathway is lipid metabolism; fatty acid beta-oxidation. Functionally, involved in the aerobic and anaerobic degradation of long-chain fatty acids via beta-oxidation cycle. Catalyzes the formation of 3-oxoacyl-CoA from enoyl-CoA via L-3-hydroxyacyl-CoA. It can also use D-3-hydroxyacyl-CoA and cis-3-enoyl-CoA as substrate. The protein is Fatty acid oxidation complex subunit alpha of Enterobacter cloacae.